The following is a 323-amino-acid chain: Muscleblind-like protein 3 (323 aa).

4 C3H1-type zinc fingers span residues 13–41 (WLTLEVCREFQRGTCSRSDAECKFAHPSR), 47–73 (NGRVIACFDSLKGRCTRENCKYLHPPP), 177–205 (TDKLEVCREFQRGNCTRGESDCRYAHPLE), and 213–239 (ENSVIVCMDYIKGRCSRDKCKYFHPPA).

It belongs to the muscleblind family. As to expression, expressed in fast and slow myotomal muscle, heart, liver, skin, brain and testis.

The protein resides in the nucleus. The protein localises to the cytoplasm. In terms of biological role, involved in pre-mRNA alternative splicing regulation. Could inhibit terminal muscle differentiation, acting at approximately the time of myogenin induction. This is Muscleblind-like protein 3 (mbnl3) from Takifugu rubripes (Japanese pufferfish).